The following is a 227-amino-acid chain: GFP-like non-fluorescent chromoprotein (227 aa).

The segment at residues 63-65 (EYG) is a cross-link (2-iminomethyl-5-imidazolinone (Glu-Gly)). Tyr64 bears the 2,3-didehydrotyrosine mark.

Belongs to the GFP family. Homotetramer. Post-translationally, contains a chromophore consisting of modified amino acid residues. The chromophore is formed by autocatalytic backbone condensation between Xaa-N and Gly-(N+2), oxidation of Tyr-(N+1) to didehydrotyrosine, and formation of a double bond to the alpha-amino nitrogen of residue Xaa-N. Maturation of the chromophore requires nothing other than molecular oxygen. The precise stereochemistry of the tyrosine has not been determined.

Functionally, non-fluorescent pigment protein that is lilac in color. The chain is GFP-like non-fluorescent chromoprotein from Radianthus crispa (Leathery sea anemone).